The chain runs to 562 residues: Phosphoglucomutase-1 (562 aa).

Met1 carries the N-acetylmethionine modification. Lys16 carries the post-translational modification N6-acetyllysine. Arg23 serves as a coordination point for alpha-D-glucose 1,6-bisphosphate. Thr115 bears the Phosphothreonine mark. Residue Ser117 participates in alpha-D-glucose 1,6-bisphosphate binding. Ser117 functions as the Phosphoserine intermediate in the catalytic mechanism. Ser117 is a Mg(2+) binding site. 2 positions are modified to phosphoserine: Ser117 and Ser134. Phosphothreonine is present on Thr185. 3 positions are modified to phosphoserine: Ser201, Ser206, and Ser213. Mg(2+)-binding residues include Asp288, Asp290, and Asp292. The alpha-D-glucose 1,6-bisphosphate site is built by Asp292 and Arg293. The residue at position 349 (Lys349) is an N6-acetyllysine. Position 353 is a phosphotyrosine (Tyr353). Position 357 (Thr357) interacts with alpha-D-glucose 1,6-bisphosphate. The residue at position 369 (Ser369) is a Phosphoserine. Positions 376, 378, and 389 each coordinate alpha-D-glucose 1,6-bisphosphate. At Ser378 the chain carries Phosphoserine. Lys419 carries the N6-succinyllysine modification. The residue at position 467 (Thr467) is a Phosphothreonine; by PAK1. A phosphoserine mark is found at Ser477, Ser485, and Ser505. Residue Thr507 is modified to Phosphothreonine. Residues Ser509 and Ser541 each carry the phosphoserine modification.

This sequence belongs to the phosphohexose mutase family. As to quaternary structure, monomer. Mg(2+) serves as cofactor. In terms of processing, phosphorylation at Thr-467 by PAK1 significantly enhances enzymatic activity.

The protein localises to the cytoplasm. The enzyme catalyses alpha-D-glucose 1-phosphate = alpha-D-glucose 6-phosphate. The catalysed reaction is O-phospho-L-seryl-[protein] + alpha-D-glucose 1-phosphate = alpha-D-glucose 1,6-bisphosphate + L-seryl-[protein]. It carries out the reaction alpha-D-glucose 1,6-bisphosphate + L-seryl-[protein] = O-phospho-L-seryl-[protein] + alpha-D-glucose 6-phosphate. Its activity is regulated as follows. Glucose-1,6-bisphosphate enhances phosphorylation of the active site Ser-117, and thereby increases enzyme activity. In terms of biological role, catalyzes the reversible isomerization of alpha-D-glucose 1-phosphate to alpha-D-glucose 6-phosphate. The mechanism proceeds via the intermediate compound alpha-D-glucose 1,6-bisphosphate. This enzyme participates in both the breakdown and synthesis of glucose. This chain is Phosphoglucomutase-1 (PGM1), found in Homo sapiens (Human).